We begin with the raw amino-acid sequence, 288 residues long: Fatty acid-binding protein TM_1468 (288 aa).

Residues valine 3–valine 283 form the DegV domain. Hexadecanoate-binding residues include threonine 63 and serine 96.

Monomer.

Functionally, binds long-chain fatty acids, such as palmitate, and may play a role in lipid transport or fatty acid metabolism. The polypeptide is Fatty acid-binding protein TM_1468 (Thermotoga maritima (strain ATCC 43589 / DSM 3109 / JCM 10099 / NBRC 100826 / MSB8)).